A 234-amino-acid polypeptide reads, in one-letter code: Peptidase E (234 aa).

Residues Ser123, Asp138, and His160 each act as charge relay system in the active site.

It belongs to the peptidase S51 family.

It is found in the cytoplasm. The catalysed reaction is Dipeptidase E catalyzes the hydrolysis of dipeptides Asp-|-Xaa. It does not act on peptides with N-terminal Glu, Asn or Gln, nor does it cleave isoaspartyl peptides.. Functionally, hydrolyzes dipeptides containing N-terminal aspartate residues. May play a role in allowing the cell to use peptide aspartate to spare carbon otherwise required for the synthesis of the aspartate family of amino acids. The protein is Peptidase E of Actinobacillus pleuropneumoniae serotype 3 (strain JL03).